A 556-amino-acid polypeptide reads, in one-letter code: MFYTHVLMSKRGPLAKIWLAAHWEKKLTKAHVFECNLEITIEKILSPKVKIALRTSGHLLLGVVRIYNRKAKYLLADCSEAFLKMKMTFCPGLVDLPKENFEASYNAITLPEEFHDFDTQNMNAIDVSEHFTQNQSRPEEITLRENFDNDLIFQAESFGEESEILRRHSFFDDNILLNSSGPLIEHSSGSLTGERSLFYDSGDGFGDEGAAGEMIDNLLQDDQNILLEDMHLNREISLPSEPPNSLAVEPDNSECICVPENEKMNETILLSTEEEGFTLDPIDISDIAEKRKGKKRRLLIDPIKELSSKVIHKQLTSFADTLMVLELAPPTQRLMMWKKRGGVHTLLSTAAQDLIHAELKMLFTKCFLSSGFKLGRKMIQKESVREEVGNQNIVETSMMQEPNYQQELSKPQTWKDVIGGSQHSSHEDTNKNINSEQDIVEMVSLAAEESSLMNDLFAQEIEYSPVELESLSNEENIETERWNGRILQMLNRLRESNKMGMQSFSLMKLCRNSDRKQAAAKFYSFLVLKKQLAIELSQSAPYADIIATMGPMFYNI.

Belongs to the rad21 family. Component of some meiotic cohesin complex composed of the SMC1 (SMC1A or SMC1B) and SMC3 heterodimer attached via their hinge domain, RAD21L which link them, and STAG3.

It localises to the nucleus. The protein resides in the chromosome. Functionally, meiosis-specific component of some cohesin complex required during the initial steps of prophase I in male meiosis. Probably required during early meiosis in males for separation of sister chromatids and homologous chromosomes. Replaces RAD21 in premeiotic S phase (during early stages of prophase I), while RAD21 reappears in later stages of prophase I. Involved in synaptonemal complex assembly, synapsis initiation and crossover recombination between homologous chromosomes during prophase I. The sequence is that of Double-strand-break repair protein rad21-like protein 1 (RAD21L1) from Homo sapiens (Human).